The sequence spans 525 residues: Adenosine deaminase AGSA (525 aa).

An N-terminal signal peptide occupies residues 1-25 (MSSFSTHNFVAIATFVCWFCCLATA). An N-linked (GlcNAc...) asparagine glycan is attached at Asn-81. Zn(2+) is bound by residues His-117 and His-119. Residue Asp-120 coordinates substrate. Asn-132 is a glycosylation site (N-linked (GlcNAc...) asparagine). Cys-142 and Cys-163 are disulfide-bonded. A glycan (N-linked (GlcNAc...) asparagine) is linked at Asn-188. Substrate contacts are provided by residues 207 to 214 (WVRFNKYF) and Gly-329. An N-linked (GlcNAc...) asparagine glycan is attached at Asn-334. His-361 serves as a coordination point for Zn(2+). The active-site Proton donor is the Glu-364. His-389 serves as the catalytic Proton acceptor. A Zn(2+)-binding site is contributed by Asp-446. Asp-447 is a substrate binding site.

Belongs to the metallo-dependent hydrolases superfamily. Adenosine and AMP deaminases family. ADGF subfamily. It depends on Zn(2+) as a cofactor. As to expression, detected in egg cordons and in the developing central nervous system. Not detected in adult central nervous system (at protein level). Atrial gland.

It is found in the secreted. The catalysed reaction is adenosine + H2O + H(+) = inosine + NH4(+). In terms of biological role, adenosine deaminase that may contribute to the degradation of extracellular adenosine, a signaling molecule that controls a variety of cellular responses. May play a role in the regulation of cell proliferation. The protein is Adenosine deaminase AGSA of Aplysia californica (California sea hare).